Consider the following 497-residue polypeptide: tRNA-2-methylthio-N(6)-dimethylallyladenosine synthase (497 aa).

Residues 1 to 10 (MTLLDSDSRQ) show a composition bias toward basic and acidic residues. The tract at residues 1–26 (MTLLDSDSRQSAEVLPAAGPAPDRPR) is disordered. An MTTase N-terminal domain is found at 26-142 (RTYQVRTFGC…LPVLLERARI (117 aa)). 6 residues coordinate [4Fe-4S] cluster: cysteine 35, cysteine 71, cysteine 105, cysteine 179, cysteine 183, and cysteine 186. A Radical SAM core domain is found at 165 to 395 (RESVYAAWVA…VALVEQIALE (231 aa)). The 67-residue stretch at 398-464 (QAQVGRVVEV…PHCLIADQVL (67 aa)) folds into the TRAM domain.

Belongs to the methylthiotransferase family. MiaB subfamily. In terms of assembly, monomer. The cofactor is [4Fe-4S] cluster.

It is found in the cytoplasm. The enzyme catalyses N(6)-dimethylallyladenosine(37) in tRNA + (sulfur carrier)-SH + AH2 + 2 S-adenosyl-L-methionine = 2-methylsulfanyl-N(6)-dimethylallyladenosine(37) in tRNA + (sulfur carrier)-H + 5'-deoxyadenosine + L-methionine + A + S-adenosyl-L-homocysteine + 2 H(+). Catalyzes the methylthiolation of N6-(dimethylallyl)adenosine (i(6)A), leading to the formation of 2-methylthio-N6-(dimethylallyl)adenosine (ms(2)i(6)A) at position 37 in tRNAs that read codons beginning with uridine. This chain is tRNA-2-methylthio-N(6)-dimethylallyladenosine synthase, found in Acidothermus cellulolyticus (strain ATCC 43068 / DSM 8971 / 11B).